Consider the following 85-residue polypeptide: uncharacterized protein (85 aa).

The disordered stretch occupies residues 44–85; it reads EAHPSEHNGTVPRSLSQEWAKILAEEAEENSEENNDESEEDN. Over residues 50 to 60 the composition is skewed to polar residues; the sequence is HNGTVPRSLSQ. The span at 68 to 85 shows a compositional bias: acidic residues; that stretch reads EEAEENSEENNDESEEDN.

This is an uncharacterized protein from Haloarcula hispanica (His1V).